The sequence spans 647 residues: MASQQNKHAFLSKNRIFHNPDNVSSSKSRNLMDITNTTNTMNGSRPSSMKSSLALPPVKDSFPSVSRSASLNINMSKIKDLKDRQDKIRFQRHTLRTQLIECEREIKTIKFRDLNKSRFELYKKKSKQAKYLKQVRDLTQNLNSKDGERADLIKKNKSALATLQAELDQNLILKRQESQELYNNKLIFWENELQIMENVEPDHEITEEISQLKKTLQELNINWANLQKQNLERQVNHESQLRKDFIAFKEAKLKSMENLTNKHRELLDQIATLQSESEKLHKEIMDIDRQAEYSEQNISEINENIKQLELANNPLISKSLQNSQDLEHLQNQMENLKEMASKQEKFYNDTYNTVEKELLRSRRLENSIIEQKGTMRCYAYVMEQNLPENLLFDYENGVITQGLSEHVYKFNRVIPHLKVSEDKFFTQEYSVYHDMCLNQKKNFNLISLSTTPHGSLRESLIKFLAEKDTIYQKQYVITLQFVFLSDDEFSQDMLLDYSHNDKDSIKLKFEKHSISLDSKLVIIENGLEDLPLNFSCDEHPNLPHSGMGIIKVQFFPRDSKSDGNNDPVPVDFYFIELNNLKSIEQFDKSIFKKESCETPIALVLKKLISDTKSFFLLNLNDSKNVNKLLTISEEVQTQLCKRKKKLT.

The segment covering 36–51 (NTTNTMNGSRPSSMKS) has biased composition (polar residues). Positions 36–55 (NTTNTMNGSRPSSMKSSLAL) are disordered. Residues 202 to 350 (DHEITEEISQ…SKQEKFYNDT (149 aa)) adopt a coiled-coil conformation.

Interacts with KAR3; the interaction is direct.

The protein resides in the cytoplasm. The protein localises to the cytoskeleton. It is found in the microtubule organizing center. Its subcellular location is the spindle pole body. It localises to the nucleus. Together with the minus end-directed microtubule motor KAR3, plays a role in microtubule organization. Recruits KAR3 to microtubules, and together they may stabilize the polymers. The KAR3-VIK1 heterodimer cross-links anti-parallel microtubules. Targets and/or maintains KAR3 at the spindle pole body during vegetative growth. This is Spindle pole body-associated protein VIK1 (VIK1) from Saccharomyces cerevisiae (strain ATCC 204508 / S288c) (Baker's yeast).